The sequence spans 148 residues: MKLILTHEVDGLGSPGDVVEVKDGYGRNYLLPRGFAIKWTRGAQKQIDSIRRARAAREIRSLDEAKQIAEQLGSLKVRLNQRAGDNGRLFGSVTSTDVAEAVKAAGGPEVDKRRIQIRNPIKSVGDYTVEIRLHPEVNVSLPIEVVGV.

This sequence belongs to the bacterial ribosomal protein bL9 family.

Binds to the 23S rRNA. The polypeptide is Large ribosomal subunit protein bL9 (Thermobifida fusca (strain YX)).